The following is a 539-amino-acid chain: Chaperonin GroEL (539 aa).

Residues 29–32 (TLGP), 86–90 (DGTTT), Gly-413, and Asp-492 contribute to the ATP site.

The protein belongs to the chaperonin (HSP60) family. In terms of assembly, forms a cylinder of 14 subunits composed of two heptameric rings stacked back-to-back. Interacts with the co-chaperonin GroES.

It is found in the cytoplasm. It carries out the reaction ATP + H2O + a folded polypeptide = ADP + phosphate + an unfolded polypeptide.. Its function is as follows. Together with its co-chaperonin GroES, plays an essential role in assisting protein folding. The GroEL-GroES system forms a nano-cage that allows encapsulation of the non-native substrate proteins and provides a physical environment optimized to promote and accelerate protein folding. The chain is Chaperonin GroEL from Fusobacterium nucleatum subsp. nucleatum (strain ATCC 25586 / DSM 15643 / BCRC 10681 / CIP 101130 / JCM 8532 / KCTC 2640 / LMG 13131 / VPI 4355).